A 167-amino-acid chain; its full sequence is Leptin (167 aa).

The signal sequence occupies residues 1–21; that stretch reads MRCGPLCRFLWLWPYLSYIEA. Cys-117 and Cys-167 are oxidised to a cystine.

The protein belongs to the leptin family.

The protein localises to the secreted. In terms of biological role, key player in the regulation of energy balance and body weight control. Once released into the circulation, has central and peripheral effects by binding LEPR, found in many tissues, which results in the activation of several major signaling pathways. In the hypothalamus, acts as an appetite-regulating factor that induces a decrease in food intake and an increase in energy consumption by inducing anorexinogenic factors and suppressing orexigenic neuropeptides, also regulates bone mass and secretion of hypothalamo-pituitary-adrenal hormones. In the periphery, increases basal metabolism, influences reproductive function, regulates pancreatic beta-cell function and insulin secretion, is pro-angiogenic for endothelial cell and affects innate and adaptive immunity. In the arcuate nucleus of the hypothalamus, activates by depolarization POMC neurons inducing FOS and SOCS3 expression to release anorexigenic peptides and inhibits by hyperpolarization NPY neurons inducing SOCS3 with a consequent reduction on release of orexigenic peptides. In addition to its known satiety inducing effect, has a modulatory role in nutrient absorption. In the intestine, reduces glucose absorption by enterocytes by activating PKC and leading to a sequential activation of p38, PI3K and ERK signaling pathways which exerts an inhibitory effect on glucose absorption. Acts as a growth factor on certain tissues, through the activation of different signaling pathways increases expression of genes involved in cell cycle regulation such as CCND1, via JAK2-STAT3 pathway, or VEGFA, via MAPK1/3 and PI3K-AKT1 pathways. May also play an apoptotic role via JAK2-STAT3 pathway and up-regulation of BIRC5 expression. Pro-angiogenic, has mitogenic activity on vascular endothelial cells and plays a role in matrix remodeling by regulating the expression of matrix metalloproteinases (MMPs) and tissue inhibitors of metalloproteinases (TIMPs). In innate immunity, modulates the activity and function of neutrophils by increasing chemotaxis and the secretion of oxygen radicals. Increases phagocytosis by macrophages and enhances secretion of pro-inflammatory mediators. Increases cytotoxic ability of NK cells. Plays a pro-inflammatory role, in synergy with IL1B, by inducing NOS2 which promotes the production of IL6, IL8 and Prostaglandin E2, through a signaling pathway that involves JAK2, PI3K, MAP2K1/MEK1 and MAPK14/p38. In adaptive immunity, promotes the switch of memory T-cells towards T helper-1 cell immune responses. Increases CD4(+)CD25(-) T-cell proliferation and reduces autophagy during TCR (T-cell receptor) stimulation, through MTOR signaling pathway activation and BCL2 up-regulation. The polypeptide is Leptin (LEP) (Ursus thibetanus (Asiatic black bear)).